Here is a 220-residue protein sequence, read N- to C-terminus: Small ribosomal subunit protein uS2 (220 aa).

The protein belongs to the universal ribosomal protein uS2 family.

This chain is Small ribosomal subunit protein uS2, found in Methanococcus maripaludis (strain DSM 14266 / JCM 13030 / NBRC 101832 / S2 / LL).